Consider the following 409-residue polypeptide: tRNA-specific 2-thiouridylase MnmA (409 aa).

Residues 20–27 (AMSGGVDS) and Leu-46 each bind ATP. Residue Cys-114 is the Nucleophile of the active site. The cysteines at positions 114 and 210 are disulfide-linked. Gly-138 contacts ATP. An interaction with tRNA region spans residues 160–162 (RDQ). Cys-210 functions as the Cysteine persulfide intermediate in the catalytic mechanism.

It belongs to the MnmA/TRMU family.

It is found in the cytoplasm. The catalysed reaction is S-sulfanyl-L-cysteinyl-[protein] + uridine(34) in tRNA + AH2 + ATP = 2-thiouridine(34) in tRNA + L-cysteinyl-[protein] + A + AMP + diphosphate + H(+). In terms of biological role, catalyzes the 2-thiolation of uridine at the wobble position (U34) of tRNA, leading to the formation of s(2)U34. The protein is tRNA-specific 2-thiouridylase MnmA of Bartonella henselae (strain ATCC 49882 / DSM 28221 / CCUG 30454 / Houston 1) (Rochalimaea henselae).